Consider the following 178-residue polypeptide: Conodipine-P2 (178 aa).

Residues 1–24 (MKLLAPVLWAMAALGVTWLVAVDS) form the signal peptide. A 4-hydroxyproline mark is found at proline 38, proline 42, and proline 49. Histidine 54 is an active-site residue. Residues 98-130 (KREVTSHRATSIAHSRLWKTALDQKSFLNRKAR) constitute a propeptide, interchain peptide. A Pyrrolidone carboxylic acid modification is found at glutamine 131. Proline 137 is subject to 4-hydroxyproline.

This sequence belongs to the phospholipase A2 family. Group IX subfamily. As to quaternary structure, heterodimer of an alpha and a beta chain; probably disulfide-linked. Ca(2+) is required as a cofactor. As to expression, expressed by the venom duct.

It is found in the secreted. The catalysed reaction is a 1,2-diacyl-sn-glycero-3-phosphocholine + H2O = a 1-acyl-sn-glycero-3-phosphocholine + a fatty acid + H(+). Functionally, catalyzes the calcium-dependent hydrolysis of the 2-acyl groups in 3-sn-phosphoglycerides. The protein is Conodipine-P2 of Conus purpurascens (Purple cone).